The primary structure comprises 204 residues: Partner of Y14 and mago (204 aa).

2 disordered regions span residues 1-27 and 52-142; these read MSTY…RKAR and QRQA…LDAP. A compositionally biased stretch (basic and acidic residues) spans 68-90; that stretch reads ESKKEREKQERTRAKKQEKESGR. Residues 120-130 show a composition bias toward polar residues; that stretch reads PSGSRDINSIS. A coiled-coil region spans residues 149 to 181; sequence AKQLKKLRKKIREIEQIESRIQAGEQKKLDKDQ.

Belongs to the pym family. As to quaternary structure, interacts (via N-terminus) with mago and tsu/Y14; the interaction is direct.

The protein resides in the cytoplasm. It localises to the nucleus. Regulator of the exon junction complex (EJC), a multiprotein complex that associates immediately upstream of the exon-exon junction on mRNAs and serves as a positional landmarks for the intron exon structure of genes and directs post-transcriptional processes in the cytoplasm such as mRNA export, nonsense-mediated mRNA decay (NMD) or translation. The protein is Partner of Y14 and mago of Drosophila simulans (Fruit fly).